Consider the following 615-residue polypeptide: Coagulation factor XII (615 aa).

Positions 1–19 (MRALLLLGFLLVSLESTLS) are cleaved as a signal peptide. One can recognise a Fibronectin type-II domain in the interval 42–90 (VTGEPCHFPFQYHRQLYHKCTHKGRPGPQPWCATTPNFDQDQRWGYCLE). Disulfide bonds link C47–C73, C61–C88, C98–C110, C104–C119, C121–C130, C135–C163, C161–C170, C178–C189, C183–C198, C200–C209, C217–C295, C238–C277, and C266–C290. The EGF-like 1 domain occupies 94–131 (VKDHCSKHSPCQKGGTCVNMPSGPHCLCPQHLTGNHCQ). T109 is a glycosylation site (O-linked (Fuc) threonine). The 41-residue stretch at 133-173 (EKCFEPQLLRFFHKNEIWYRTEQAAVARCQCKGPDAHCQRL) folds into the Fibronectin type-I domain. The 37-residue stretch at 174–210 (ASQACRTNPCLHGGRCLEVEGHRLCHCPVGYTGAFCD) folds into the EGF-like 2 domain. The region spanning 217–295 (CYDGRGLSYR…SWEYCDLAQC (79 aa)) is the Kringle domain. N249 is a glycosylation site (N-linked (GlcNAc...) asparagine). Residues 298–359 (PTQAAPPTPV…SLTRNGPLSC (62 aa)) form a disordered region. O-linked (GalNAc...) threonine glycosylation is found at T299 and T305. O-linked (GalNAc...) serine glycosylation is present at S308. Positions 317–326 (PAQPAPPKPQ) are enriched in pro residues. The segment covering 327–338 (PTTRTPPQSQTP) has biased composition (low complexity). 3 O-linked (GalNAc...) threonine glycosylation sites follow: T328, T329, and T337. 7 disulfide bridges follow: C359–C486, C397–C413, C405–C475, C436–C439, C500–C569, C532–C548, and C559–C590. The Peptidase S1 domain occupies 373 to 614 (VVGGLVALRG…YLAWIREHTV (242 aa)). The Charge relay system role is filled by H412. An N-linked (GlcNAc...) asparagine glycan is attached at N433. D461 functions as the Charge relay system in the catalytic mechanism. S563 functions as the Charge relay system in the catalytic mechanism.

This sequence belongs to the peptidase S1 family. Interacts with HRG; the interaction, which is enhanced in the presence of zinc ions and inhibited by heparin-binding, inhibits factor XII autoactivation and contact-initiated coagulation. Interacts (inactive and activated) with D7L2, an anticoagulant protein from Anopheles gambiae. Interacts (activated) with iripin-8, a serine protease inhibitor from Ixodes ricinus saliva. Interacts (inactive and activated) (via amino acids 1-77) with triafestin-1 and triafestin-2, anticoagulant proteins from Triatoma infestans. Interacts (inactive and activated) (via amino acids 1-77) with short form salivary protein D7R1, an anticoagulant protein from Anopheles stephensi. Interacts (inactive and activated) (via fibronectin type II domain) with haemaphysalin, an anticoagulant protein from Haemaphysalis longicornis. Factor XII is activated by kallikrein in alpha-factor XIIa, which is further converted by trypsin into beta-factor XIIa. Alpha-factor XIIa is composed of an NH2-terminal heavy chain, called coagulation factor XIIa heavy chain, and a COOH-terminal light chain, called coagulation factor XIIa light chain, connected by a disulfide bond. Beta-factor XIIa is composed of 2 chains linked by a disulfide bond, an N-terminal nonapeptide, called beta-factor XIIa part 1, and coagulation factor XIIa light chain, also known in this context as beta-factor XIIa part 2. Post-translationally, O- and N-glycosylated. The O-linked polysaccharides were not identified, but are probably the mucin type linked to GalNAc.

It is found in the secreted. It catalyses the reaction Selective cleavage of Arg-|-Ile bonds in factor VII to form factor VIIa and factor XI to form factor XIa.. Activity is promoted in the presence of negatively charged surfaces. Its function is as follows. Factor XII is a serum glycoprotein that participates in the initiation of blood coagulation, fibrinolysis, and the generation of bradykinin and angiotensin. Prekallikrein is cleaved by factor XII to form kallikrein, which then cleaves factor XII first to alpha-factor XIIa and then trypsin cleaves it to beta-factor XIIa. Alpha-factor XIIa activates factor XI to factor XIa. The polypeptide is Coagulation factor XII (F12) (Homo sapiens (Human)).